We begin with the raw amino-acid sequence, 520 residues long: Succinyl-CoA:3-ketoacid coenzyme A transferase 2A, mitochondrial (520 aa).

Residues 1–39 (MAALRLLAWALPRGVSALRPPPALPHRLIRRYVSDRSGS) constitute a mitochondrion transit peptide. A disordered region spans residues 280 to 299 (ERLTTRDSKPAPGSKDNDPS). Glutamate 342 functions as the 5-glutamyl coenzyme A thioester intermediate in the catalytic mechanism.

Belongs to the 3-oxoacid CoA-transferase family. In terms of assembly, homodimer.

It is found in the mitochondrion. The catalysed reaction is a 3-oxo acid + succinyl-CoA = a 3-oxoacyl-CoA + succinate. The protein operates within ketone metabolism; succinyl-CoA degradation; acetoacetyl-CoA from succinyl-CoA: step 1/1. Its function is as follows. Key enzyme for ketone body catabolism. Transfers the CoA moiety from succinate to acetoacetate. Formation of the enzyme-CoA intermediate proceeds via an unstable anhydride species formed between the carboxylate groups of the enzyme and substrate. Probably play and important roles in the energy metabolism of spermatozoa. This is Succinyl-CoA:3-ketoacid coenzyme A transferase 2A, mitochondrial (Oxct2a) from Mus musculus (Mouse).